The chain runs to 323 residues: Syntaxin-42 (323 aa).

The Cytoplasmic portion of the chain corresponds to 1-302 (MATRNRTTVY…QREGAMVKCA (302 aa)). A t-SNARE coiled-coil homology domain is found at 227-289 (QHVSAERERE…EEGYKQLQKA (63 aa)). Residues 303–323 (TILLVLCLIMIVLLILKNILF) traverse the membrane as a helical; Anchor for type IV membrane protein segment.

This sequence belongs to the syntaxin family. Interacts with VTI12 and SYP61 to form a t-SNARE complex and with VPS45. Expressed at low levels in roots, stems, flowers and leaves.

It localises to the golgi apparatus. It is found in the trans-Golgi network membrane. Functionally, contributes to the regulation of secretory and vacuolar transport pathways in the post-Golgi network, and to the maintenance of the Golgi apparatus and trans-Golgi network (TGN) morphologies. Vesicle trafficking protein that functions in the secretory pathway and mediates liposome fusion. Required for extracellular resistance responses to a fungal pathogen. Also involved in the protection of chloroplasts from salicylic acid-dependent biotic stress. The sequence is that of Syntaxin-42 from Arabidopsis thaliana (Mouse-ear cress).